Consider the following 380-residue polypeptide: Chaperone protein DnaJ (380 aa).

The J domain occupies 5-72; the sequence is DYYDTLGVPK…QKRAAYDQYG (68 aa). The tract at residues 21–47 is disordered; the sequence is IKKAYRKLAMKHHPDRNQGDTSKVSED. A compositionally biased stretch (basic residues) spans 24 to 34; the sequence is AYRKLAMKHHP. A compositionally biased stretch (basic and acidic residues) spans 35–47; the sequence is DRNQGDTSKVSED. The CR-type zinc-finger motif lies at 139–217; that stretch reads GKEAQIRIPS…CHGVGKTKNN (79 aa). Residues Cys152, Cys155, Cys169, Cys172, Cys191, Cys194, Cys205, and Cys208 each contribute to the Zn(2+) site. CXXCXGXG motif repeat units lie at residues 152 to 159, 169 to 176, 191 to 198, and 205 to 212; these read CGICHGTG, CTTCHGHG, CPQCKGSG, and CVACHGVG.

The protein belongs to the DnaJ family. As to quaternary structure, homodimer. Zn(2+) is required as a cofactor.

The protein resides in the cytoplasm. Participates actively in the response to hyperosmotic and heat shock by preventing the aggregation of stress-denatured proteins and by disaggregating proteins, also in an autonomous, DnaK-independent fashion. Unfolded proteins bind initially to DnaJ; upon interaction with the DnaJ-bound protein, DnaK hydrolyzes its bound ATP, resulting in the formation of a stable complex. GrpE releases ADP from DnaK; ATP binding to DnaK triggers the release of the substrate protein, thus completing the reaction cycle. Several rounds of ATP-dependent interactions between DnaJ, DnaK and GrpE are required for fully efficient folding. Also involved, together with DnaK and GrpE, in the DNA replication of plasmids through activation of initiation proteins. This chain is Chaperone protein DnaJ, found in Polaromonas naphthalenivorans (strain CJ2).